The primary structure comprises 523 residues: Mogroside I-A1 synthase (523 aa).

His39 acts as the Proton acceptor in catalysis. The Charge relay role is filled by Asp136. Ser311, Gln374, Trp392, Asn393, Ser394, Glu397, Asp413, and Gln414 together coordinate UDP-alpha-D-glucose.

The protein belongs to the UDP-glycosyltransferase family. As to expression, highly expressed in young fruits 15 and 34 days after anthesis (15-DAA and 34-DAA).

It catalyses the reaction mogrol + UDP-alpha-D-glucose = mogroside I-A1 + UDP + H(+). The enzyme catalyses mogroside I-A1 + UDP-alpha-D-glucose = mogroside IIE + UDP + H(+). The catalysed reaction is mogroside IE + UDP-alpha-D-glucose = mogroside IIE + UDP + H(+). It carries out the reaction mogroside II-A1 + UDP-alpha-D-glucose = mogroside IIIX + UDP + H(+). It catalyses the reaction mogroside II-A + UDP-alpha-D-glucose = mogroside III + UDP + H(+). The enzyme catalyses mogroside IIE + UDP-alpha-D-glucose = mogroside III-C3(1-&gt;6) + UDP + H(+). The catalysed reaction is mogroside III + UDP-alpha-D-glucose = isomogroside IV + UDP + H(+). It carries out the reaction mogroside III + UDP-alpha-D-glucose = mogroside IV + UDP + H(+). It catalyses the reaction mogroside IIIX + UDP-alpha-D-glucose = mogroside IVA + UDP + H(+). The enzyme catalyses siamenoside I + UDP-alpha-D-glucose = isomogroside V + UDP + H(+). Its pathway is secondary metabolite biosynthesis; terpenoid biosynthesis. UDP-glycosyltransferase involved in the biosynthesis of cucurbitacin and mogroside tetracyclic triterpene natural products (e.g. siamenoside I and mogrosides IV, V and VI). Cucurbitacins have cytotoxic properties and exhibit deterrent taste as a defense barrier against herbivores. Mogrosides are nonsugar highly oxygenated compounds used as high-intensity zero-calorie sweeteners; they also possess pharmacological properties such as regulating immunity, lowering blood sugar and lipid levels, protecting the liver, and acting as antioxidants and antitumor agents. Catalyzes the C24 primary glucosylation of mogrol and mogroside I-E1, and the C3 primary glucosylation of mogroside I-A1, mogroside II-A1 and mogroside II-A. Also supports branching glucosylations of mogroside II-E, mogroside III, mogroside IIIx and siamenoside I. The sequence is that of Mogroside I-A1 synthase from Siraitia grosvenorii (Monk's fruit).